Here is a 206-residue protein sequence, read N- to C-terminus: Ribosomal RNA small subunit methyltransferase G (206 aa).

S-adenosyl-L-methionine-binding positions include G74, L79, 125 to 126, and R140; that span reads VE.

Belongs to the methyltransferase superfamily. RNA methyltransferase RsmG family.

It is found in the cytoplasm. It carries out the reaction guanosine(527) in 16S rRNA + S-adenosyl-L-methionine = N(7)-methylguanosine(527) in 16S rRNA + S-adenosyl-L-homocysteine. Functionally, specifically methylates the N7 position of guanine in position 527 of 16S rRNA. The sequence is that of Ribosomal RNA small subunit methyltransferase G from Shewanella woodyi (strain ATCC 51908 / MS32).